Reading from the N-terminus, the 213-residue chain is 3,4-dihydroxy-2-butanone 4-phosphate synthase (213 aa).

Residues 37-38 (RE), Asp42, 150-154 (RAGHT), and Glu174 contribute to the D-ribulose 5-phosphate site. Mg(2+) is bound at residue Glu38. His153 is a Mg(2+) binding site.

This sequence belongs to the DHBP synthase family. In terms of assembly, homodimer. Mg(2+) is required as a cofactor. It depends on Mn(2+) as a cofactor.

It catalyses the reaction D-ribulose 5-phosphate = (2S)-2-hydroxy-3-oxobutyl phosphate + formate + H(+). Its pathway is cofactor biosynthesis; riboflavin biosynthesis; 2-hydroxy-3-oxobutyl phosphate from D-ribulose 5-phosphate: step 1/1. Catalyzes the conversion of D-ribulose 5-phosphate to formate and 3,4-dihydroxy-2-butanone 4-phosphate. This chain is 3,4-dihydroxy-2-butanone 4-phosphate synthase, found in Buchnera aphidicola subsp. Schizaphis graminum (strain Sg).